The chain runs to 365 residues: tRNA-specific 2-thiouridylase MnmA (365 aa).

Residues 9–16 and Met-35 contribute to the ATP site; that span reads AMSGGVDS. Residue Cys-105 is the Nucleophile of the active site. Cysteines 105 and 203 form a disulfide. Gly-129 contributes to the ATP binding site. Residues 153–155 are interaction with tRNA; the sequence is KDQ. The active-site Cysteine persulfide intermediate is the Cys-203. The interval 308–309 is interaction with tRNA; that stretch reads RY.

Belongs to the MnmA/TRMU family.

It localises to the cytoplasm. The catalysed reaction is S-sulfanyl-L-cysteinyl-[protein] + uridine(34) in tRNA + AH2 + ATP = 2-thiouridine(34) in tRNA + L-cysteinyl-[protein] + A + AMP + diphosphate + H(+). Its function is as follows. Catalyzes the 2-thiolation of uridine at the wobble position (U34) of tRNA, leading to the formation of s(2)U34. This Pelotomaculum thermopropionicum (strain DSM 13744 / JCM 10971 / SI) protein is tRNA-specific 2-thiouridylase MnmA.